A 229-amino-acid chain; its full sequence is UPF0319 protein Sbal223_2728 (229 aa).

Residues 1-21 (MKSLLPISSLLVLLGSASAFA) form the signal peptide.

This sequence belongs to the UPF0319 family.

The polypeptide is UPF0319 protein Sbal223_2728 (Shewanella baltica (strain OS223)).